Consider the following 155-residue polypeptide: Xanthine-guanine phosphoribosyltransferase (155 aa).

5-phospho-alpha-D-ribose 1-diphosphate-binding positions include 37–38 (RG) and 91–99 (DDLVDTGNT). Mg(2+) is bound at residue Asp92. Residues Asp95 and Ile138 each coordinate guanine. Xanthine contacts are provided by Asp95 and Ile138. GMP-binding positions include 95-99 (DTGNT) and 137-138 (WI).

It belongs to the purine/pyrimidine phosphoribosyltransferase family. XGPT subfamily. As to quaternary structure, homotetramer. It depends on Mg(2+) as a cofactor.

The protein resides in the cell inner membrane. The enzyme catalyses GMP + diphosphate = guanine + 5-phospho-alpha-D-ribose 1-diphosphate. It carries out the reaction XMP + diphosphate = xanthine + 5-phospho-alpha-D-ribose 1-diphosphate. It catalyses the reaction IMP + diphosphate = hypoxanthine + 5-phospho-alpha-D-ribose 1-diphosphate. Its pathway is purine metabolism; GMP biosynthesis via salvage pathway; GMP from guanine: step 1/1. It functions in the pathway purine metabolism; XMP biosynthesis via salvage pathway; XMP from xanthine: step 1/1. Acts on guanine, xanthine and to a lesser extent hypoxanthine. Functionally, purine salvage pathway enzyme that catalyzes the transfer of the ribosyl-5-phosphate group from 5-phospho-alpha-D-ribose 1-diphosphate (PRPP) to the N9 position of the 6-oxopurines guanine and xanthine to form the corresponding ribonucleotides GMP (guanosine 5'-monophosphate) and XMP (xanthosine 5'-monophosphate), with the release of PPi. To a lesser extent, also acts on hypoxanthine. This chain is Xanthine-guanine phosphoribosyltransferase, found in Haemophilus influenzae (strain ATCC 51907 / DSM 11121 / KW20 / Rd).